A 264-amino-acid chain; its full sequence is 3-methyl-2-oxobutanoate hydroxymethyltransferase (264 aa).

2 residues coordinate Mg(2+): Asp42 and Asp81. 3-methyl-2-oxobutanoate contacts are provided by residues 42-43 (DS), Asp81, and Lys110. Residue Glu112 participates in Mg(2+) binding. Catalysis depends on Glu179, which acts as the Proton acceptor.

Belongs to the PanB family. As to quaternary structure, homodecamer; pentamer of dimers. Requires Mg(2+) as cofactor.

The protein resides in the cytoplasm. The enzyme catalyses 3-methyl-2-oxobutanoate + (6R)-5,10-methylene-5,6,7,8-tetrahydrofolate + H2O = 2-dehydropantoate + (6S)-5,6,7,8-tetrahydrofolate. It participates in cofactor biosynthesis; (R)-pantothenate biosynthesis; (R)-pantoate from 3-methyl-2-oxobutanoate: step 1/2. In terms of biological role, catalyzes the reversible reaction in which hydroxymethyl group from 5,10-methylenetetrahydrofolate is transferred onto alpha-ketoisovalerate to form ketopantoate. In Francisella tularensis subsp. tularensis (strain FSC 198), this protein is 3-methyl-2-oxobutanoate hydroxymethyltransferase.